The sequence spans 541 residues: Developmental and secondary metabolism regulator VEL1 (541 aa).

The region spanning Asn-26–Arg-220 is the Velvet domain. A Nuclear localization signal motif is present at residues Glu-40–Cys-45. Disordered regions lie at residues Asp-222–Gln-447 and Pro-464–Lys-483. Residues Gly-230–Arg-244 are compositionally biased toward basic and acidic residues. Positions Ala-289 to Leu-298 are enriched in low complexity. Pro residues-rich tracts occupy residues Pro-299–Ala-314, Ala-345–Pro-355, and Ser-425–Ser-439. Residues Met-444–Leu-472 are PEST.

Belongs to the velvet family. VeA subfamily. As to quaternary structure, component of the heterotrimeric velvet complex composed of LAE1, VEL1 and VEL2; VEL1 acting as a bridging protein between LAE1 and VEL2.

The protein localises to the nucleus. The protein resides in the cytoplasm. Its function is as follows. Component of the velvet transcription factor complex that controls sexual/asexual developmental ratio in response to light, promoting sexual development in the darkness while stimulating asexual sporulation under illumination. The velvet complex acts as a global regulator for secondary metabolite gene expression. Controls the expression of the gliotoxin gene cluster. Plays a key role in mycoparasitism. This chain is Developmental and secondary metabolism regulator VEL1, found in Hypocrea virens (strain Gv29-8 / FGSC 10586) (Gliocladium virens).